Here is a 157-residue protein sequence, read N- to C-terminus: Protein Smg (157 aa).

The protein belongs to the Smg family.

The chain is Protein Smg from Escherichia coli O139:H28 (strain E24377A / ETEC).